A 206-amino-acid polypeptide reads, in one-letter code: Elongation factor 1-beta (206 aa).

At alanine 2 the chain carries N-acetylalanine. A Glycyl lysine isopeptide (Lys-Gly) (interchain with G-Cter in ubiquitin) cross-link involves residue lysine 13. Residues serine 31 and serine 86 each carry the phosphoserine modification.

This sequence belongs to the EF-1-beta/EF-1-delta family. In terms of assembly, the eukaryotic elongation factor 1 complex (eEF1) is probably a heterohexamer. Two trimeric complexes, each composed of eEF1A (TEF1 or TEF2), eEF1Balpha (EFB1) and eEF1Bgamma (CAM1 or TEF4), are probably dimerized via the eF1Bgamma subunits. eEF1Balpha interacts directly with eEF1A. eEF1Balpha and eEF1Bgamma form the eEF1B subcomplex with the GEF activity. In terms of processing, S-thiolated in response to oxidative stress, probably inhibiting the protein and causing a reduction in protein synthesis.

The protein operates within protein biosynthesis; polypeptide chain elongation. Its function is as follows. Catalytic subunit of the guanine nucleotide exchange factor (GEF) (eEF1B subcomplex) of the eukaryotic elongation factor 1 complex (eEF1). Stimulates the exchange of GDP for GTP on elongation factor 1A (eEF1A), probably by displacing GDP from the nucleotide binding pocket in eEF1A. The 30-fold higher concentration of GTP compared to GDP in cells favors the formation of eEF1A-GTP, which rapidly forms a ternary complex with aminoacyl-tRNA that in turn displaces eEF1B from the complex. This chain is Elongation factor 1-beta (EFB1), found in Saccharomyces cerevisiae (strain ATCC 204508 / S288c) (Baker's yeast).